Here is a 434-residue protein sequence, read N- to C-terminus: Neuropeptide receptor 22 (434 aa).

At 1 to 55 (MDEGGGIGSSLLSRITTTASEIMMRNEPTTTENPAVQEMNHIYHLTPSMKMLCIL) the chain is on the extracellular side. A helical transmembrane segment spans residues 56 to 76 (FYSILCVCCVYGNVLVILVIV). At 77–86 (YFKRLRTATN) the chain is on the cytoplasmic side. The helical transmembrane segment at 87 to 107 (ILILNLAVADLLISVFCIPFS) threads the bilayer. Topologically, residues 108 to 128 (YWQVLIYDDQRWLFGSMMCSL) are extracellular. The cysteines at positions 126 and 204 are disulfide-linked. Residues 129-149 (LAFLQAMAVFLSAWTLVVISF) traverse the membrane as a helical segment. The Cytoplasmic portion of the chain corresponds to 150 to 169 (DRWMAIMFLLTPNIRITRRR). The helical transmembrane segment at 170-190 (ALYLVAATWIFSILMALPLLF) threads the bilayer. Residues 191-226 (TTRFFEDQDGLPNCGENWTYFGDSGEQVRKVYSSMV) lie on the Extracellular side of the membrane. A glycan (N-linked (GlcNAc...) asparagine) is linked at asparagine 207. A helical membrane pass occupies residues 227-247 (LILQYVVPQAVLIITYTHIGI). The Cytoplasmic segment spans residues 248-277 (KMWNSRVPGMQNGATKKMIVDRHESVKKLV). The chain crosses the membrane as a helical span at residues 278–298 (PMVILISALFALCWLPLLILI). The Extracellular portion of the chain corresponds to 299 to 310 (NVIPEFYPDINS). Residues 311–331 (WGYILYLWWFAHGLAMSHSMV) form a helical membrane-spanning segment. The Cytoplasmic segment spans residues 332 to 434 (NPIIYFIRNA…VRNNSANSLA (103 aa)).

It belongs to the G-protein coupled receptor 1 family. Expressed in many cells, mainly in the head region, with expression detected in the head muscles, I2 neurons, MC neurons, RIH neuron, AIA neurons, AUA neurons, ASK neurons, ASI neurons, a few B-type motorneurons in the posterior ventral nerve cord, pharyngeal muscles, body wall muscles, the intestine and a few classes of unidentified cells anterior to the nerve ring. Expression in the MC neurons is important to mediate suppression of feeding while expression in the RIH neuron is important for the facilitation of egg-laying. No expression detected in other tissues including hypodermis.

It is found in the cell membrane. Receptor for the LURY-1-1 and LURY-1-2 peptides which control food-related processes including feeding, lifespan, egg-laying and roaming behavior. Receptor for flp-7 which stimulates serotonin-induced fat loss. Serotonin induces secretion of flp-7 from neurons and binding to npr-22 which leads to induction of the atgp-1 lipase and subsequent fat loss. Acts in vitro as a receptor for the flp-7 FMRFamide-like neuropeptides TPMQRSSMVRF-amide, SPMQRSSMVRF-amide, SPMERSAMVRF-amide and SPMDRSKMVRF-amide. Also acts in vitro as a receptor for a number of other FMRFamide-like neuropeptides including the flp-1 neuropeptide PNFMRY-amide, the flp-9 neuropeptide KPSFVRF-amide, the flp-11 neuropeptides AMRNALVRF-amide, ASGGMRNALVRF-amide and NGAPQPFVRF-amide, the flp-13 neuropeptides AADGAPLIRF-amide, ASPSAPLIRF-amide, SPSAVPLIRF-amide, SAAAPLIRF-amide and ASSAPLIRF-amide, and the flp-22 neuropeptide SPSAKWMRF-amide. The SPMERSAMVRF-amide neuropeptide from flp-7 acts as the strongest in vitro activator of npr-22. The protein is Neuropeptide receptor 22 of Caenorhabditis elegans.